A 330-amino-acid polypeptide reads, in one-letter code: Beta-hexosaminidase (330 aa).

Substrate contacts are provided by residues aspartate 62, arginine 70, arginine 133, and lysine 163–histidine 164. Catalysis depends on histidine 176, which acts as the Proton donor/acceptor. Aspartate 246 (nucleophile) is an active-site residue.

This sequence belongs to the glycosyl hydrolase 3 family. NagZ subfamily.

The protein resides in the cytoplasm. The catalysed reaction is Hydrolysis of terminal non-reducing N-acetyl-D-hexosamine residues in N-acetyl-beta-D-hexosaminides.. The protein operates within cell wall biogenesis; peptidoglycan recycling. Functionally, plays a role in peptidoglycan recycling by cleaving the terminal beta-1,4-linked N-acetylglucosamine (GlcNAc) from peptide-linked peptidoglycan fragments, giving rise to free GlcNAc, anhydro-N-acetylmuramic acid and anhydro-N-acetylmuramic acid-linked peptides. The polypeptide is Beta-hexosaminidase (Idiomarina loihiensis (strain ATCC BAA-735 / DSM 15497 / L2-TR)).